We begin with the raw amino-acid sequence, 348 residues long: Flagellar P-ring protein (348 aa).

An N-terminal signal peptide occupies residues 1-16 (MRVLTIFLLFMTSIFA).

Belongs to the FlgI family. As to quaternary structure, the basal body constitutes a major portion of the flagellar organelle and consists of four rings (L,P,S, and M) mounted on a central rod.

The protein localises to the periplasm. The protein resides in the bacterial flagellum basal body. Functionally, assembles around the rod to form the L-ring and probably protects the motor/basal body from shearing forces during rotation. The sequence is that of Flagellar P-ring protein from Campylobacter jejuni subsp. jejuni serotype O:6 (strain 81116 / NCTC 11828).